Reading from the N-terminus, the 191-residue chain is Protein Ves (191 aa).

The protein belongs to the Ves family.

The protein is Protein Ves of Escherichia coli O139:H28 (strain E24377A / ETEC).